Reading from the N-terminus, the 237-residue chain is Ubiquinone biosynthesis O-methyltransferase (237 aa).

Residues R38, G58, D79, and M124 each coordinate S-adenosyl-L-methionine.

Belongs to the methyltransferase superfamily. UbiG/COQ3 family.

It catalyses the reaction a 3-demethylubiquinol + S-adenosyl-L-methionine = a ubiquinol + S-adenosyl-L-homocysteine + H(+). The catalysed reaction is a 3-(all-trans-polyprenyl)benzene-1,2-diol + S-adenosyl-L-methionine = a 2-methoxy-6-(all-trans-polyprenyl)phenol + S-adenosyl-L-homocysteine + H(+). It functions in the pathway cofactor biosynthesis; ubiquinone biosynthesis. O-methyltransferase that catalyzes the 2 O-methylation steps in the ubiquinone biosynthetic pathway. In Acinetobacter baumannii (strain AB307-0294), this protein is Ubiquinone biosynthesis O-methyltransferase.